Reading from the N-terminus, the 513-residue chain is Protein phosphatase 1H (513 aa).

Ser-7 bears the Phosphoserine mark. One can recognise a PPM-type phosphatase domain in the interval 77–506; that stretch reads ATGYAEVINA…DDISVYVIPL (430 aa). The disordered stretch occupies residues 110–133; that stretch reads ITSTPNRNSKRRSSLPNGEGLQLK. Thr-113 carries the post-translational modification Phosphothreonine. Phosphoserine is present on residues Ser-123 and Ser-210. Position 212 is an omega-N-methylarginine (Arg-212). The residue at position 220 (Ser-220) is a Phosphoserine. Position 223 is a phosphothreonine (Thr-223). The residue at position 421 (Ser-421) is a Phosphoserine.

This sequence belongs to the PP2C family.

Its subcellular location is the nucleus. It is found in the cytoplasm. The enzyme catalyses O-phospho-L-seryl-[protein] + H2O = L-seryl-[protein] + phosphate. It catalyses the reaction O-phospho-L-threonyl-[protein] + H2O = L-threonyl-[protein] + phosphate. In terms of biological role, dephosphorylates CDKN1B at 'Thr-187', thus removing a signal for proteasomal degradation. This chain is Protein phosphatase 1H (Ppm1h), found in Rattus norvegicus (Rat).